We begin with the raw amino-acid sequence, 132 residues long: MCDAFVGTWKLVSSENFDDYMKEVGVGFATRKVAGMAKPNMIISVNGDVITIRSESTFKNTEISFKLGQEFDEVTADDRKVKSIITLDGGVLVQVQKWDGKSTTIKRKREDDKLVVECVMKGVTSTRVYERA.

Residue C2 is modified to N-acetylcysteine. At S13 the chain carries Phosphoserine. Y20 bears the Phosphotyrosine; by Tyr-kinases mark. The Nuclear localization signal signature appears at 22 to 32 (KEVGVGFATRK). 127–129 (RVY) serves as a coordination point for a fatty acid.

Belongs to the calycin superfamily. Fatty-acid binding protein (FABP) family. As to quaternary structure, monomer. Homodimer. Interacts with PPARG.

It is found in the cytoplasm. It localises to the nucleus. Its function is as follows. Lipid transport protein in adipocytes. Binds both long chain fatty acids and retinoic acid. Delivers long-chain fatty acids and retinoic acid to their cognate receptors in the nucleus. FABPs are important elements related to the hibernating state in mammals. This Ictidomys tridecemlineatus (Thirteen-lined ground squirrel) protein is Fatty acid-binding protein, adipocyte (FABP4).